The sequence spans 101 residues: Chaperone modulatory protein CbpM (101 aa).

This sequence belongs to the CbpM family.

Interacts with CbpA and inhibits both the DnaJ-like co-chaperone activity and the DNA binding activity of CbpA. Together with CbpA, modulates the activity of the DnaK chaperone system. Does not inhibit the co-chaperone activity of DnaJ. The sequence is that of Chaperone modulatory protein CbpM from Pseudomonas putida (strain ATCC 47054 / DSM 6125 / CFBP 8728 / NCIMB 11950 / KT2440).